Here is a 1377-residue protein sequence, read N- to C-terminus: DNA-directed RNA polymerase subunit beta (1377 aa).

The protein belongs to the RNA polymerase beta chain family. In terms of assembly, the RNAP catalytic core consists of 2 alpha, 1 beta, 1 beta' and 1 omega subunit. When a sigma factor is associated with the core the holoenzyme is formed, which can initiate transcription.

The enzyme catalyses RNA(n) + a ribonucleoside 5'-triphosphate = RNA(n+1) + diphosphate. DNA-dependent RNA polymerase catalyzes the transcription of DNA into RNA using the four ribonucleoside triphosphates as substrates. This is DNA-directed RNA polymerase subunit beta from Brucella canis (strain ATCC 23365 / NCTC 10854 / RM-666).